We begin with the raw amino-acid sequence, 500 residues long: Allene oxide synthase 3 (500 aa).

Residues 1–26 (MAPPPVNSGDAAAAATGEKSKLSPSG) are disordered. Substrate is bound by residues 297-298 (FN), lysine 304, and 365-368 (PVEF). Heme is bound at residue cysteine 452.

This sequence belongs to the cytochrome P450 family. Heme serves as cofactor. In terms of tissue distribution, not expressed in dark-grown seedlings.

The catalysed reaction is (13S)-hydroperoxy-(9Z,11E,15Z)-octadecatrienoate = (9Z,13S,15Z)-12,13-epoxyoctadeca-9,11,15-trienoate + H2O. It functions in the pathway lipid metabolism; oxylipin biosynthesis. Its function is as follows. Involved in the biosynthesis of jasmonic acid, a growth regulator that is implicated also as a signaling molecule in plant defense. Converts 13-hydroperoxylinolenic acid to 12,13-epoxylinolenic acid. This is Allene oxide synthase 3 (CYP74A3) from Oryza sativa subsp. japonica (Rice).